The sequence spans 153 residues: Large ribosomal subunit protein bL9 (153 aa).

This sequence belongs to the bacterial ribosomal protein bL9 family.

Binds to the 23S rRNA. The sequence is that of Large ribosomal subunit protein bL9 from Synechococcus sp. (strain JA-3-3Ab) (Cyanobacteria bacterium Yellowstone A-Prime).